We begin with the raw amino-acid sequence, 676 residues long: Lon-like protease BrxL (676 aa).

Belongs to the BrxL family.

BREX systems (bacteriophage exclusion) provide immunity against bacteriophage. Part of a type 1 BREX system. This system allows phage adsorption but prevents phage DNA replication, without degradation of the phage DNA. Methylation of bacterial DNA by PglX probably guides self/non-self discrimination. When the brxA-brxB-brxC-pglX and pglZ-brxL operons are transformed into a susceptible B.subtilis strain (BEST7003) they confer resistance to bacteriophages SPbeta, SP16, Zeta, phi3T and SP02 and partial protection to phages SP01 and SP82G (these include lytic and temperate phage). They do not protect against phages phi105, rho10 or rho14. Additionally confers a very slight reduction in efficiency of plasmid transformation. The protein is Lon-like protease BrxL of Bacillus cereus (strain H3081.97).